The sequence spans 46 residues: Protein YmiA (46 aa).

A helical transmembrane segment spans residues 22-42; sequence AWLAVFLGSALFWVVVALLIW.

The protein localises to the cell inner membrane. The polypeptide is Protein YmiA (ymiA) (Escherichia coli (strain K12)).